Here is a 622-residue protein sequence, read N- to C-terminus: Probable potassium transport system protein Kup 2 (622 aa).

Transmembrane regions (helical) follow at residues 9–29 (LSGV…TSPL), 46–66 (PASI…VVSV), 99–119 (TPLL…EVVI), 137–157 (PSLD…LFAI), 169–189 (FAPI…NSIF), 213–233 (ASFF…ALYA), 247–267 (WFMV…ALLL), 285–305 (ALLP…QAVI), 337–357 (IYIP…IMSF), 363–383 (LAAA…ILSC), 396–416 (LVAA…AANL), and 419–439 (IFSG…VMTS).

It belongs to the HAK/KUP transporter (TC 2.A.72) family.

Its subcellular location is the cell inner membrane. The catalysed reaction is K(+)(in) + H(+)(in) = K(+)(out) + H(+)(out). Functionally, transport of potassium into the cell. Likely operates as a K(+):H(+) symporter. The chain is Probable potassium transport system protein Kup 2 from Aeromonas hydrophila subsp. hydrophila (strain ATCC 7966 / DSM 30187 / BCRC 13018 / CCUG 14551 / JCM 1027 / KCTC 2358 / NCIMB 9240 / NCTC 8049).